The primary structure comprises 230 residues: Large ribosomal subunit protein uL1 (230 aa).

This sequence belongs to the universal ribosomal protein uL1 family. As to quaternary structure, part of the 50S ribosomal subunit.

Its function is as follows. Binds directly to 23S rRNA. The L1 stalk is quite mobile in the ribosome, and is involved in E site tRNA release. Protein L1 is also a translational repressor protein, it controls the translation of the L11 operon by binding to its mRNA. The sequence is that of Large ribosomal subunit protein uL1 from Nitrosospira multiformis (strain ATCC 25196 / NCIMB 11849 / C 71).